The chain runs to 338 residues: Solute carrier family 35 member G3 (338 aa).

The interval 1 to 24 is disordered; sequence MAGSHPYFNQPDSTHPSPPSAPPS. 9 helical membrane-spanning segments follow: residues 37-57, 67-87, 105-125, 160-180, 185-205, 221-241, 250-270, 281-301, and 305-325; these read TSGLLVALLGGGLPAGFVGPL, LPSLELLIWRCLFHLPIALLL, FFCALLNILSIGCAYSAVQVV, CGLLGCILGLIIIVGPGLWTL, TGVYTALGYVEAFLGGLALSL, TVAFLSGLVGLLGSVPGLFVL, LLSWSCVGAVGILALVSFTCV, LVCAVLHSEVVVALILQYYML, and VAPSDIVAAGVVLGSIAIITA. In terms of domain architecture, EamA 1 spans 49-174; sequence LPAGFVGPLS…CILGLIIIVG (126 aa). The region spanning 272 to 325 is the EamA 2 domain; sequence YAVTKAHPALVCAVLHSEVVVALILQYYMLHETVAPSDIVAAGVVLGSIAIITA.

It belongs to the SLC35G solute transporter family. In terms of tissue distribution, expressed in testis.

Its subcellular location is the membrane. The sequence is that of Solute carrier family 35 member G3 (SLC35G3) from Homo sapiens (Human).